Reading from the N-terminus, the 850-residue chain is Probable beta-glucosidase J (850 aa).

Asparagine 43 and asparagine 52 each carry an N-linked (GlcNAc...) asparagine glycan. Aspartate 254 is an active-site residue. A PA14 domain is found at threonine 423 to valine 583. A glycan (N-linked (GlcNAc...) asparagine) is linked at asparagine 508.

The protein belongs to the glycosyl hydrolase 3 family.

Its subcellular location is the secreted. The catalysed reaction is Hydrolysis of terminal, non-reducing beta-D-glucosyl residues with release of beta-D-glucose.. Its pathway is glycan metabolism; cellulose degradation. Functionally, beta-glucosidases are one of a number of cellulolytic enzymes involved in the degradation of cellulosic biomass. Catalyzes the last step releasing glucose from the inhibitory cellobiose. The polypeptide is Probable beta-glucosidase J (bglJ) (Emericella nidulans (strain FGSC A4 / ATCC 38163 / CBS 112.46 / NRRL 194 / M139) (Aspergillus nidulans)).